Consider the following 385-residue polypeptide: V-type proton ATPase subunit C (385 aa).

This sequence belongs to the V-ATPase C subunit family. In terms of assembly, V-ATPase is a heteromultimeric enzyme made up of two complexes: the ATP-hydrolytic V1 complex and the proton translocation V0 complex. The V1 complex consists of three catalytic AB heterodimers that form a heterohexamer, three peripheral stalks each consisting of EG heterodimers, one central rotor including subunits D and F, and the regulatory subunits C and H. The proton translocation complex V0 consists of the proton transport subunit a, a ring of proteolipid subunits c9c'', rotary subunit d, subunits e and f, and the accessory subunits VhaAC45 and ATP6AP2.

Functionally, subunit of the V1 complex of vacuolar(H+)-ATPase (V-ATPase), a multisubunit enzyme composed of a peripheral complex (V1) that hydrolyzes ATP and a membrane integral complex (V0) that translocates protons. V-ATPase is responsible for acidifying and maintaining the pH of intracellular compartments and in some cell types, is targeted to the plasma membrane, where it is responsible for acidifying the extracellular environment. Subunit C is necessary for the assembly of the catalytic sector of the enzyme and is likely to have a specific function in its catalytic activity. This chain is V-type proton ATPase subunit C, found in Manduca sexta (Tobacco hawkmoth).